The following is a 234-amino-acid chain: Membrane glycoprotein RL11 (234 aa).

The N-terminal stretch at 1 to 23 (MQTYSTPLTLIIVTSLFLFTTQG) is a signal peptide. A helical membrane pass occupies residues 183-203 (LHCAWVSGLMIFVGALVICFL).

Its subcellular location is the host membrane. This chain is Membrane glycoprotein RL11 (RL11), found in Human cytomegalovirus (strain Merlin) (HHV-5).